Here is a 440-residue protein sequence, read N- to C-terminus: tRNA-2-methylthio-N(6)-dimethylallyladenosine synthase (440 aa).

An MTTase N-terminal domain is found at 5–121 (KKLYIKTYGC…LPEMEAKAGT (117 aa)). Residues C14, C50, C84, C159, C163, and C166 each coordinate [4Fe-4S] cluster. The 234-residue stretch at 145 to 378 (AKRGPTAFLT…LTRQQREVQD (234 aa)) folds into the Radical SAM core domain. The 63-residue stretch at 378 to 440 (DSMVGRELGV…ANSLAGELID (63 aa)) folds into the TRAM domain.

This sequence belongs to the methylthiotransferase family. MiaB subfamily. Monomer. The cofactor is [4Fe-4S] cluster.

Its subcellular location is the cytoplasm. It carries out the reaction N(6)-dimethylallyladenosine(37) in tRNA + (sulfur carrier)-SH + AH2 + 2 S-adenosyl-L-methionine = 2-methylsulfanyl-N(6)-dimethylallyladenosine(37) in tRNA + (sulfur carrier)-H + 5'-deoxyadenosine + L-methionine + A + S-adenosyl-L-homocysteine + 2 H(+). Functionally, catalyzes the methylthiolation of N6-(dimethylallyl)adenosine (i(6)A), leading to the formation of 2-methylthio-N6-(dimethylallyl)adenosine (ms(2)i(6)A) at position 37 in tRNAs that read codons beginning with uridine. This is tRNA-2-methylthio-N(6)-dimethylallyladenosine synthase from Ruegeria sp. (strain TM1040) (Silicibacter sp.).